The sequence spans 390 residues: Galactokinase (390 aa).

Position 33-36 (33-36) interacts with substrate; it reads EHTD. Residues Ser67 and 124–130 contribute to the ATP site; that span reads GAGLSSS. Positions 130 and 162 each coordinate Mg(2+). Asp174 acts as the Proton acceptor in catalysis. Position 224 (Tyr224) interacts with substrate.

This sequence belongs to the GHMP kinase family. GalK subfamily.

The protein resides in the cytoplasm. The enzyme catalyses alpha-D-galactose + ATP = alpha-D-galactose 1-phosphate + ADP + H(+). It participates in carbohydrate metabolism; galactose metabolism. Catalyzes the transfer of the gamma-phosphate of ATP to D-galactose to form alpha-D-galactose-1-phosphate (Gal-1-P). The sequence is that of Galactokinase from Bacillus subtilis (strain 168).